The sequence spans 146 residues: Anti-sigma F factor (146 aa).

This sequence belongs to the anti-sigma-factor family.

The enzyme catalyses L-seryl-[protein] + ATP = O-phospho-L-seryl-[protein] + ADP + H(+). It catalyses the reaction L-threonyl-[protein] + ATP = O-phospho-L-threonyl-[protein] + ADP + H(+). Functionally, binds to sigma F and blocks its ability to form an RNA polymerase holoenzyme (E-sigma F). Phosphorylates SpoIIAA on a serine residue. This phosphorylation may enable SpoIIAA to act as an anti-anti-sigma factor that counteracts SpoIIAB and thus releases sigma F from inhibition. The sequence is that of Anti-sigma F factor from Geobacillus sp. (strain WCH70).